Reading from the N-terminus, the 288-residue chain is Nucleotide-binding protein ASA_0318 (288 aa).

Residue 8-15 participates in ATP binding; sequence GRSGSGKT. 56-59 is a GTP binding site; it reads DVRN.

It belongs to the RapZ-like family.

Displays ATPase and GTPase activities. This is Nucleotide-binding protein ASA_0318 from Aeromonas salmonicida (strain A449).